The following is a 431-amino-acid chain: Aspartokinase (431 aa).

This sequence belongs to the aspartokinase family.

It catalyses the reaction L-aspartate + ATP = 4-phospho-L-aspartate + ADP. The protein operates within amino-acid biosynthesis; L-lysine biosynthesis via DAP pathway; (S)-tetrahydrodipicolinate from L-aspartate: step 1/4. Its pathway is amino-acid biosynthesis; L-methionine biosynthesis via de novo pathway; L-homoserine from L-aspartate: step 1/3. It participates in amino-acid biosynthesis; L-threonine biosynthesis; L-threonine from L-aspartate: step 1/5. In Chlamydia trachomatis serovar D (strain ATCC VR-885 / DSM 19411 / UW-3/Cx), this protein is Aspartokinase (lysC).